A 132-amino-acid polypeptide reads, in one-letter code: Small ribosomal subunit protein uS11 (132 aa).

The span at 1-16 (MAAGMKGKRSRRRKER) shows a compositional bias: basic residues. A disordered region spans residues 1-20 (MAAGMKGKRSRRRKERKNVE).

The protein belongs to the universal ribosomal protein uS11 family. As to quaternary structure, part of the 30S ribosomal subunit. Interacts with proteins S7 and S18. Binds to IF-3.

Located on the platform of the 30S subunit, it bridges several disparate RNA helices of the 16S rRNA. Forms part of the Shine-Dalgarno cleft in the 70S ribosome. In Clostridium botulinum (strain Hall / ATCC 3502 / NCTC 13319 / Type A), this protein is Small ribosomal subunit protein uS11.